The sequence spans 206 residues: Putative cryptic phosphonate transport system permease protein PhnE1 (206 aa).

A run of 3 helical transmembrane segments spans residues 30 to 50 (WFSL…WQGA), 92 to 112 (IAVW…LMSA), and 137 to 157 (MVFA…GVLA).

As to quaternary structure, if the reading frame is restored, the complex is composed of two ATP-binding proteins (PhnC), two transmembrane proteins (PhnE) and a solute-binding protein (PhnD).

It localises to the cell inner membrane. N-terminal fragment of the PhnE protein, part of a phosphonate usage operon that is cryptic in K12 strains. Growth of K12 strains on phosphonate can be observed when it is used as the sole phosphorus source after a 60 hour lag period, suggesting the operon is activated. An intact PhnE in strain B is (AC A0A140NFA3). Part of the binding-protein-dependent transport system for phosphonates; probably responsible for the translocation of the substrate across the membrane. This Escherichia coli (strain K12) protein is Putative cryptic phosphonate transport system permease protein PhnE1 (phnE1).